The primary structure comprises 84 residues: U2-theraphotoxin-Cg1b 1 (84 aa).

An N-terminal signal peptide occupies residues 1-21 (MKVSVLITLAVWGVMFLLTSA). Residues 22 to 48 (QERGSDQMDSPAWLKSMERIFQSEERE) constitute a propeptide that is removed on maturation. Intrachain disulfides connect Cys49/Cys63, Cys56/Cys68, and Cys62/Cys76.

It belongs to the neurotoxin 10 (Hwtx-1) family. 06 (F4b) subfamily. As to expression, expressed by the venom gland.

It is found in the secreted. Functionally, probable ion channel inhibitor. The sequence is that of U2-theraphotoxin-Cg1b 1 from Chilobrachys guangxiensis (Chinese earth tiger tarantula).